A 226-amino-acid chain; its full sequence is Sugar fermentation stimulation protein homolog (226 aa).

This sequence belongs to the SfsA family.

In Clostridium beijerinckii (strain ATCC 51743 / NCIMB 8052) (Clostridium acetobutylicum), this protein is Sugar fermentation stimulation protein homolog.